The chain runs to 194 residues: dITP/XTP pyrophosphatase (194 aa).

8-13 (TSNPGK) contributes to the substrate binding site. Residues Glu-38 and Asp-67 each contribute to the Mg(2+) site. Asp-67 serves as the catalytic Proton acceptor. Substrate contacts are provided by residues Ser-68, 152–155 (FGYD), Lys-175, and 180–181 (HR).

This sequence belongs to the HAM1 NTPase family. As to quaternary structure, homodimer. Requires Mg(2+) as cofactor.

The catalysed reaction is XTP + H2O = XMP + diphosphate + H(+). It catalyses the reaction dITP + H2O = dIMP + diphosphate + H(+). The enzyme catalyses ITP + H2O = IMP + diphosphate + H(+). Pyrophosphatase that catalyzes the hydrolysis of nucleoside triphosphates to their monophosphate derivatives, with a high preference for the non-canonical purine nucleotides XTP (xanthosine triphosphate), dITP (deoxyinosine triphosphate) and ITP. Seems to function as a house-cleaning enzyme that removes non-canonical purine nucleotides from the nucleotide pool, thus preventing their incorporation into DNA/RNA and avoiding chromosomal lesions. This chain is dITP/XTP pyrophosphatase, found in Legionella pneumophila (strain Paris).